The sequence spans 285 residues: uncharacterized protein (285 aa).

Serine 168 lines the substrate pocket. The active-site Proton acceptor is tyrosine 181.

The protein belongs to the short-chain dehydrogenases/reductases (SDR) family.

This is an uncharacterized protein from Haemophilus influenzae (strain ATCC 51907 / DSM 11121 / KW20 / Rd).